Here is a 366-residue protein sequence, read N- to C-terminus: Histidinol-phosphate aminotransferase (366 aa).

N6-(pyridoxal phosphate)lysine is present on K231.

The protein belongs to the class-II pyridoxal-phosphate-dependent aminotransferase family. Histidinol-phosphate aminotransferase subfamily. It depends on pyridoxal 5'-phosphate as a cofactor.

It catalyses the reaction L-histidinol phosphate + 2-oxoglutarate = 3-(imidazol-4-yl)-2-oxopropyl phosphate + L-glutamate. It functions in the pathway amino-acid biosynthesis; L-histidine biosynthesis; L-histidine from 5-phospho-alpha-D-ribose 1-diphosphate: step 7/9. In Halobacterium salinarum (strain ATCC 29341 / DSM 671 / R1), this protein is Histidinol-phosphate aminotransferase.